The primary structure comprises 103 residues: Small integral membrane protein 32 (103 aa).

The helical transmembrane segment at 55-75 (YLLLFFLLLLSVALVVLFIGC) threads the bilayer.

The protein localises to the membrane. The polypeptide is Small integral membrane protein 32 (Homo sapiens (Human)).